Here is a 158-residue protein sequence, read N- to C-terminus: Pathogenesis-related protein 2 (158 aa).

The protein belongs to the BetVI family.

In Petroselinum crispum (Parsley), this protein is Pathogenesis-related protein 2 (PR2).